The primary structure comprises 135 residues: NADPH-dependent 7-cyano-7-deazaguanine reductase (135 aa).

Catalysis depends on cysteine 48, which acts as the Thioimide intermediate. Aspartate 55 functions as the Proton donor in the catalytic mechanism. Residues 70–72 and 89–90 contribute to the substrate site; these read IEL and HE.

The protein belongs to the GTP cyclohydrolase I family. QueF type 1 subfamily.

It is found in the cytoplasm. It catalyses the reaction 7-aminomethyl-7-carbaguanine + 2 NADP(+) = 7-cyano-7-deazaguanine + 2 NADPH + 3 H(+). It functions in the pathway tRNA modification; tRNA-queuosine biosynthesis. In terms of biological role, catalyzes the NADPH-dependent reduction of 7-cyano-7-deazaguanine (preQ0) to 7-aminomethyl-7-deazaguanine (preQ1). The protein is NADPH-dependent 7-cyano-7-deazaguanine reductase of Prochlorococcus marinus (strain MIT 9313).